Consider the following 381-residue polypeptide: CCN family member 1 (381 aa).

Residues 1 to 24 (MSSRIARALALVVTLLHLTRLALS) form the signal peptide. One can recognise an IGFBP N-terminal domain in the interval 25-94 (TCPAACHCPL…TALKGICRAQ (70 aa)). 6 disulfide bridges follow: cysteine 26-cysteine 50, cysteine 30-cysteine 52, cysteine 32-cysteine 53, cysteine 39-cysteine 56, cysteine 64-cysteine 78, and cysteine 70-cysteine 91. In terms of domain architecture, VWFC spans 98–164 (RPCEYNSRIY…GQCCEEWVCD (67 aa)). Serine 188 is subject to Phosphoserine. Positions 228-273 (KCIVQTTSWSQCSKTCGTGISTRVTNDNPECRLVKETRICEVRPCG) constitute a TSP type-1 domain. Residues 279–315 (SLKKGKKCSKTKKSPEPVRFTYAGCLSVKKYRPKYCG) form a heparin-binding region. Cystine bridges form between cysteine 286/cysteine 323, cysteine 303/cysteine 337, cysteine 314/cysteine 353, cysteine 317/cysteine 355, and cysteine 322/cysteine 359. The CTCK domain maps to 286–360 (CSKTKKSPEP…QSCKCNYNCP (75 aa)).

Belongs to the CCN family. As to quaternary structure, interaction with integrins is heparin- and cell-type-dependent and promotes cell adhesion.

The protein localises to the secreted. Its function is as follows. Promotes cell proliferation, chemotaxis, angiogenesis and cell adhesion. Appears to play a role in wound healing by up-regulating, in skin fibroblasts, the expression of a number of genes involved in angiogenesis, inflammation and matrix remodeling including VEGA-A, VEGA-C, MMP1, MMP3, TIMP1, uPA, PAI-1 and integrins alpha-3 and alpha-5. CCN1-mediated gene regulation is dependent on heparin-binding. Down-regulates the expression of alpha-1 and alpha-2 subunits of collagen type-1. Promotes cell adhesion and adhesive signaling through integrin alpha-6/beta-1, cell migration through integrin alpha-1/beta-5 and cell proliferation through integrin alpha-v/beta-3. The chain is CCN family member 1 (CCN1) from Pan troglodytes (Chimpanzee).